A 281-amino-acid chain; its full sequence is uncharacterized protein (281 aa).

A signal peptide spans 1–23 (MKLYRSLKAALLPGICTSILLAS). Residue Cys-24 is the site of N-palmitoyl cysteine attachment. Cys-24 carries S-diacylglycerol cysteine lipidation. Positions 145–165 (HHDHNHMHNHEHEHEEHHDEE) are disordered. A compositionally biased stretch (basic and acidic residues) spans 150–161 (HMHNHEHEHEEH).

The protein resides in the cell membrane. This is an uncharacterized protein from Mycoplasma genitalium (strain ATCC 33530 / DSM 19775 / NCTC 10195 / G37) (Mycoplasmoides genitalium).